A 206-amino-acid polypeptide reads, in one-letter code: Endoribonuclease YbeY (206 aa).

The disordered stretch occupies residues 1 to 20; the sequence is MSQANHNDTHNNIDDNINNH. Residues His168, His172, and His178 each contribute to the Zn(2+) site.

The protein belongs to the endoribonuclease YbeY family. Zn(2+) serves as cofactor.

Its subcellular location is the cytoplasm. Functionally, single strand-specific metallo-endoribonuclease involved in late-stage 70S ribosome quality control and in maturation of the 3' terminus of the 16S rRNA. The sequence is that of Endoribonuclease YbeY from Psychrobacter arcticus (strain DSM 17307 / VKM B-2377 / 273-4).